Consider the following 364-residue polypeptide: tRNA/tmRNA (uracil-C(5))-methyltransferase (364 aa).

Residues Gln189, Tyr216, Asn221, Glu237, and Asp297 each coordinate S-adenosyl-L-methionine. The active-site Nucleophile is Cys322. Glu356 serves as the catalytic Proton acceptor.

The protein belongs to the class I-like SAM-binding methyltransferase superfamily. RNA M5U methyltransferase family. TrmA subfamily.

The enzyme catalyses uridine(54) in tRNA + S-adenosyl-L-methionine = 5-methyluridine(54) in tRNA + S-adenosyl-L-homocysteine + H(+). It catalyses the reaction uridine(341) in tmRNA + S-adenosyl-L-methionine = 5-methyluridine(341) in tmRNA + S-adenosyl-L-homocysteine + H(+). Its function is as follows. Dual-specificity methyltransferase that catalyzes the formation of 5-methyluridine at position 54 (m5U54) in all tRNAs, and that of position 341 (m5U341) in tmRNA (transfer-mRNA). The polypeptide is tRNA/tmRNA (uracil-C(5))-methyltransferase (Campylobacter curvus (strain 525.92)).